A 484-amino-acid polypeptide reads, in one-letter code: Iroquois-class homeodomain protein IRX-5 (484 aa).

Positions 112 to 174 (DPAYRKNATR…NARRRLKKEN (63 aa)) form a DNA-binding region, homeobox; TALE-type. Disordered stretches follow at residues 176-393 (MTWT…QCPF) and 424-443 (GHPG…FNGL). Positions 185 to 202 (EDEEEEENIDLEKNDEDE) are enriched in acidic residues. Composition is skewed to basic and acidic residues over residues 203–212 (PQKPEDKGDL) and 249–265 (SDFK…ELPR). The residue at position 273 (Ser273) is a Phosphoserine. The segment covering 318 to 328 (SPPPPPPPPPA) has biased composition (pro residues). The span at 375-389 (SRASPAPAPARSPSA) shows a compositional bias: low complexity. Ser465 carries the phosphoserine modification.

This sequence belongs to the TALE/IRO homeobox family. Not expressed in the developing metanephric kidney or adult kidney.

Its subcellular location is the nucleus. Its function is as follows. Establishes the cardiac repolarization gradient by its repressive actions on the KCND2 potassium-channel gene. Required for retinal cone bipolar cell differentiation. May regulate contrast adaptation in the retina and control specific aspects of visual function in circuits of the mammalian retina. Involved in craniofacial and gonadal development. Modulates the migration of progenitor cell populations in branchial arches and gonads by repressing CXCL12. The protein is Iroquois-class homeodomain protein IRX-5 (Irx5) of Mus musculus (Mouse).